Here is a 160-residue protein sequence, read N- to C-terminus: Seed allergenic protein RA5 (160 aa).

An N-terminal signal peptide occupies residues M1–A26. Disulfide bonds link C42-C92, C56-C80, C64-C124, C81-C140, and C94-C152.

It belongs to the protease inhibitor I6 (cereal trypsin/alpha-amylase inhibitor) family. Post-translationally, five disulfide bonds are present.

The protein resides in the secreted. Functionally, seed storage protein. The protein is Seed allergenic protein RA5 (RA5) of Oryza sativa subsp. japonica (Rice).